A 456-amino-acid chain; its full sequence is Keratin, type I cytoskeletal 12 (456 aa).

Residues 1-19 (MSLSVRTSALSRRSSSQNG) are compositionally biased toward polar residues. A disordered region spans residues 1 to 25 (MSLSVRTSALSRRSSSQNGVAGRPW). The head stretch occupies residues 1-114 (MSLSVRTSAL…GNDGGLLSGS (114 aa)). The interval 115 to 150 (EKETMQNLNDRLASYLGKVRALEEANAELENKIREW) is coil 1A. The region spanning 115–402 (EKETMQNLND…RLLEGDTQGD (288 aa)) is the IF rod domain. The interval 154–171 (RRTGDSGSQSDYSKYYPL) is linker 1. Positions 172–263 (IEDLKNKIIS…KNHEEELQSF (92 aa)) are coil 1B. Residues 264 to 286 (QAGGPGEVNVEMDAAPGVDLTKS) are linker 12. The interval 287–397 (GELRKEINSN…IETYRRLLEG (111 aa)) is coil 2. Positions 398–456 (DTQGDGFDESLSLTVSKPQAPSVDSSKDPNKTRKIKTVVQEIVNGEVVSSQVQELEEAM) are tail. The disordered stretch occupies residues 405–430 (DESLSLTVSKPQAPSVDSSKDPNKTR). The span at 408–421 (LSLTVSKPQAPSVD) shows a compositional bias: polar residues.

The protein belongs to the intermediate filament family. As to quaternary structure, heterotetramer of two type I and two type II keratins. Keratin-3 associates with keratin-12.

Functionally, involved in corneal epithelium organization, integrity and corneal keratin expression. The protein is Keratin, type I cytoskeletal 12 of Rattus norvegicus (Rat).